A 176-amino-acid chain; its full sequence is Small ribosomal subunit protein uS5 (176 aa).

The S5 DRBM domain occupies 15–78 (FEERIVEIRR…SAARRNVFEV (64 aa)).

It belongs to the universal ribosomal protein uS5 family. Part of the 30S ribosomal subunit. Contacts proteins S4 and S8.

In terms of biological role, with S4 and S12 plays an important role in translational accuracy. Functionally, located at the back of the 30S subunit body where it stabilizes the conformation of the head with respect to the body. This chain is Small ribosomal subunit protein uS5, found in Thermosipho africanus (strain TCF52B).